The following is a 1543-amino-acid chain: ATP-binding cassette sub-family C member 2 (1543 aa).

The Extracellular segment spans residues 1-26 (MDEFCNSTFWNLSLLKSPEADLPLCF). N-linked (GlcNAc...) asparagine glycans are attached at residues Asn-6 and Asn-11. Residues 27–47 (EQTVLVWIPLGFLWLLAPWQL) traverse the membrane as a helical segment. The Cytoplasmic portion of the chain corresponds to 48–67 (YRIYRSRTKRFAITKFYLAK). Residues 68 to 88 (QVFVVCLLILAAIDLSLALTE) form a helical membrane-spanning segment. Residues 89 to 92 (DTGQ) lie on the Extracellular side of the membrane. The chain crosses the membrane as a helical span at residues 93–113 (ATIPPVKYTNPILYLCTWLLV). Residues 114 to 125 (LVIQHCRQCCIQ) are Cytoplasmic-facing. A helical membrane pass occupies residues 126-146 (KNSWFLSMFWILSLLCGIFQF). Residues 147–164 (QTLIRALLQDSKSNMTYS) are Extracellular-facing. N-linked (GlcNAc...) asparagine glycosylation is present at Asn-160. Residues 165 to 185 (CLFFVSYGFQIVILILSAFSE) form a helical membrane-spanning segment. Topologically, residues 186-311 (SSDSTHAPSA…DFPKSWLVKA (126 aa)) are cytoplasmic. Residues 260 to 285 (LKKSQQSPEGTSHGLTKKQSQSQDVL) form a disordered region. The segment covering 263-283 (SQQSPEGTSHGLTKKQSQSQD) has biased composition (polar residues). 2 positions are modified to phosphoserine: Ser-279 and Ser-281. Residues 312–332 (LFKTFYVVILKSFILKLAHDI) form a helical membrane-spanning segment. The ABC transmembrane type-1 1 domain maps to 320 to 603 (ILKSFILKLA…LPMVISSVIQ (284 aa)). At 333 to 358 (LLFLNPQLLKFLIGFVKDPDSYPWVG) the chain is on the extracellular side. Residues 359 to 379 (YIYAILMFSVTLIQSFFLQCY) form a helical membrane-spanning segment. The Cytoplasmic portion of the chain corresponds to 380-435 (FQFCFVLGMTVRTTIIASVYKKALTLSNLARRQYTIGETVNLMSVDSQKLMDVTNY). The helical transmembrane segment at 436 to 456 (IHLLWSSVLQIALSIFFLWRE) threads the bilayer. Residues 457-459 (LGP) lie on the Extracellular side of the membrane. The helical transmembrane segment at 460–480 (SILAGVGLMVLLVPVNGVLAT) threads the bilayer. The Cytoplasmic portion of the chain corresponds to 481–542 (KIRKIQVQNM…NLLRFSQLQT (62 aa)). Residues 543-563 (ILIFILHLTPTLVSVITFSVY) form a helical membrane-spanning segment. Residues 564–585 (VLVDSQNVLNAEKAFTSITLFN) are Extracellular-facing. Residues 586-606 (ILRFPLAMLPMVISSVIQASV) traverse the membrane as a helical segment. At 607 to 969 (SVDRLEQYLG…VKFSIYLKYL (363 aa)) the chain is on the cytoplasmic side. One can recognise an ABC transporter 1 domain in the interval 635–859 (VQFSEASFTW…KGVFAKNWKT (225 aa)). 669–676 (GTVGSGKS) is a binding site for ATP. At Ser-876 the chain carries Phosphoserine. The segment at 903–927 (RENSLRRTLSRSSRSGSRRGKSLKS) is disordered. Over residues 908 to 917 (RRTLSRSSRS) the composition is skewed to low complexity. Phosphoserine occurs at positions 924 and 928. A helical membrane pass occupies residues 970 to 990 (QAVGWWSLLFIVIFYVLNYVA). The ABC transmembrane type-1 2 domain maps to 977–1262 (LLFIVIFYVL…LVRMTSEVET (286 aa)). Residues 991-1031 (FIGTNLWLSAWTSDSEKQNGTDNSPSQRDMRIGVFGALGIA) are Extracellular-facing. The N-linked (GlcNAc...) asparagine glycan is linked to Asn-1009. The helical transmembrane segment at 1032–1052 (QGIFLLSSSLWSIYACRNASK) threads the bilayer. The Cytoplasmic portion of the chain corresponds to 1053–1095 (TLHRQLLTNILRAPMSFFDTTPTGRIVNRFAGDISTVDDTLPQ). Residues 1096–1116 (TLRSWLLCFFGIVSTLVMICM) traverse the membrane as a helical segment. Position 1117 (Ala-1117) is a topological domain, extracellular. The helical transmembrane segment at 1118–1138 (TPIFIIIIIPLSILYVSVQVF) threads the bilayer. The Cytoplasmic segment spans residues 1139 to 1209 (YVATSRQLRR…TSNRWLAIRL (71 aa)). A helical transmembrane segment spans residues 1210–1230 (ELVGNLIVFCSALLLVIYKNS). At 1231–1232 (LT) the chain is on the extracellular side. The helical transmembrane segment at 1233-1253 (GDTVGFVLSNALNITQTLNWL) threads the bilayer. The Cytoplasmic segment spans residues 1254–1543 (VRMTSEVETN…GIESVNHTEL (290 aa)). Positions 1298–1532 (IQFNNYQVRY…MGPFYLMAKE (235 aa)) constitute an ABC transporter 2 domain. Residue 1332-1339 (GRTGAGKS) participates in ATP binding. Ser-1436 carries the phosphoserine modification.

This sequence belongs to the ABC transporter superfamily. ABCC family. Conjugate transporter (TC 3.A.1.208) subfamily. In terms of tissue distribution, expressed in liver.

Its subcellular location is the apical cell membrane. The enzyme catalyses an S-substituted glutathione(in) + ATP + H2O = an S-substituted glutathione(out) + ADP + phosphate + H(+). It catalyses the reaction taurolithocholate 3-sulfate(in) + ATP + H2O = taurolithocholate 3-sulfate(out) + ADP + phosphate + H(+). It carries out the reaction ATP + H2O + xenobioticSide 1 = ADP + phosphate + xenobioticSide 2.. The catalysed reaction is leukotriene C4(in) + ATP + H2O = leukotriene C4(out) + ADP + phosphate + H(+). The enzyme catalyses 17beta-estradiol 17-O-(beta-D-glucuronate)(in) + ATP + H2O = 17beta-estradiol 17-O-(beta-D-glucuronate)(out) + ADP + phosphate + H(+). It catalyses the reaction (4Z,15Z)-bilirubin IXalpha C8-beta-D-glucuronoside(in) + ATP + H2O = (4Z,15Z)-bilirubin IXalpha C8-beta-D-glucuronoside(out) + ADP + phosphate + H(+). It carries out the reaction (4Z,15Z)-bilirubin IXalpha C8,C12-beta-D-bisglucuronoside(in) + ATP + H2O = (4Z,15Z)-bilirubin IXalpha C8,C12-beta-D-bisglucuronoside(out) + ADP + phosphate + H(+). Functionally, ATP-dependent transporter of the ATP-binding cassette (ABC) family that binds and hydrolyzes ATP to enable active transport of various substrates including many drugs, toxicants and endogenous compound across cell membranes. Transports a wide variety of conjugated organic anions such as sulfate-, glucuronide- and glutathione (GSH)-conjugates of endo- and xenobiotics substrates. Mediates hepatobiliary excretion of mono- and bis-glucuronidated bilirubin molecules and therefore play an important role in bilirubin detoxification. Mediates also hepatobiliary excretion of others glucuronide conjugates such as 17beta-estradiol 17-glucosiduronic acid and leukotriene C4. Transports sulfated bile salt such as taurolithocholate sulfate. Transports various anticancer drugs, such as anthracycline, vinca alkaloid and methotrexate and HIV-drugs such as protease inhibitors. This is ATP-binding cassette sub-family C member 2 from Mus musculus (Mouse).